The chain runs to 376 residues: CYP enzymes assisting alcohol dehydrogenase (376 aa).

8 residues coordinate Zn(2+): C43, T45, H64, C94, C97, C100, C108, and C173. T45 is a binding site for NAD(+). Residues T45 and H64 each coordinate substrate. NAD(+) contacts are provided by residues 199–204 (GLGAVG), D223, K228, 294–296 (LGA), F320, and K371.

This sequence belongs to the zinc-containing alcohol dehydrogenase family. Class-III subfamily. As to quaternary structure, homodimer. It depends on Zn(2+) as a cofactor.

It participates in alkaloid biosynthesis. Functionally, may be a positive catalyzer of strictosidine production by assisting secologanin biosynthesis, thus being involved in monoterpene indole alkaloids accumulation. This is CYP enzymes assisting alcohol dehydrogenase from Catharanthus roseus (Madagascar periwinkle).